We begin with the raw amino-acid sequence, 154 residues long: MGLSDGEWQLVLKVWGKVEADIAGHGQEVLIRLFKDHPETLEKFDKFKNLKTEDEMKASEDLKKHGSTVLGALGGILKKKGQHEAEIKPLAQSHATKHKIPVKYLEFISEAIIQVLKSKHSGDFGADAQGAMSKALELFRNDIAAKYKELGFQG.

The 147-residue stretch at Gly2–Lys148 folds into the Globin domain. Position 4 is a phosphoserine (Ser4). His65 contributes to the nitrite binding site. Residue His65 participates in O2 binding. The residue at position 68 (Thr68) is a Phosphothreonine. His94 is a heme b binding site.

This sequence belongs to the globin family. Monomeric.

The protein localises to the cytoplasm. It localises to the sarcoplasm. The catalysed reaction is Fe(III)-heme b-[protein] + nitric oxide + H2O = Fe(II)-heme b-[protein] + nitrite + 2 H(+). It catalyses the reaction H2O2 + AH2 = A + 2 H2O. Its function is as follows. Monomeric heme protein which primary function is to store oxygen and facilitate its diffusion within muscle tissues. Reversibly binds oxygen through a pentacoordinated heme iron and enables its timely and efficient release as needed during periods of heightened demand. Depending on the oxidative conditions of tissues and cells, and in addition to its ability to bind oxygen, it also has a nitrite reductase activity whereby it regulates the production of bioactive nitric oxide. Under stress conditions, like hypoxia and anoxia, it also protects cells against reactive oxygen species thanks to its pseudoperoxidase activity. This is Myoglobin (MB) from Sciurus vulgaris (Eurasian red squirrel).